Here is a 389-residue protein sequence, read N- to C-terminus: Acetylornithine aminotransferase (389 aa).

Pyridoxal 5'-phosphate contacts are provided by residues 104–105 (GT) and F131. R134 is a binding site for N(2)-acetyl-L-ornithine. 216 to 219 (DEVQ) contributes to the pyridoxal 5'-phosphate binding site. K245 carries the N6-(pyridoxal phosphate)lysine modification. S273 contributes to the N(2)-acetyl-L-ornithine binding site. T274 lines the pyridoxal 5'-phosphate pocket.

The protein belongs to the class-III pyridoxal-phosphate-dependent aminotransferase family. ArgD subfamily. In terms of assembly, homodimer. It depends on pyridoxal 5'-phosphate as a cofactor.

It is found in the cytoplasm. It carries out the reaction N(2)-acetyl-L-ornithine + 2-oxoglutarate = N-acetyl-L-glutamate 5-semialdehyde + L-glutamate. It functions in the pathway amino-acid biosynthesis; L-arginine biosynthesis; N(2)-acetyl-L-ornithine from L-glutamate: step 4/4. This is Acetylornithine aminotransferase from Methanopyrus kandleri (strain AV19 / DSM 6324 / JCM 9639 / NBRC 100938).